A 147-amino-acid chain; its full sequence is MKLHELRPAEGAVRDRKRKGRGTASGLGKTAGRGSNGQKARSGGGVRPGFEGGQMPLYRRLPKRGFTNIFANVYNEINIDRLNAFENGTVVTAELLKETGVIKKIEKDGIKILGNGNLEKSLTVQAQKFTKSAIEKIEAAGGKAEVM.

Over residues 1-14 the composition is skewed to basic and acidic residues; the sequence is MKLHELRPAEGAVR. The disordered stretch occupies residues 1-54; the sequence is MKLHELRPAEGAVRDRKRKGRGTASGLGKTAGRGSNGQKARSGGGVRPGFEGGQ. Gly residues-rich tracts occupy residues 23–35 and 42–52; these read TASG…GRGS and SGGGVRPGFEG.

The protein belongs to the universal ribosomal protein uL15 family. Part of the 50S ribosomal subunit.

In terms of biological role, binds to the 23S rRNA. The protein is Large ribosomal subunit protein uL15 of Alkaliphilus oremlandii (strain OhILAs) (Clostridium oremlandii (strain OhILAs)).